The primary structure comprises 412 residues: MATSIPTNNPLHTETSSQKNYGFALTSLTLLFFMWGFITCLNDILIPHLKNVFQLNYTQSMLIQFCFFGAYFIVSLPAGQLVKRISYKRGIVVGLIVAAIGCALFIPAASYRVYALFLGALFVLASGVTILQVAANPYVTILGKPETAASRLTLTQAFNSLGTTVAPVFGAVLILSAATDATVNAEADAVRFPYLLLALAFTVLAIIFAILKPPDVQEDEPALSDKKEGSAWQYRHLVLGAIGIFVYVGAEVSVGSFLVNFLSDPTVAGLSETDAAHHVAYFWGGAMVGRFIGSAAMRYIDDGKALAFNAFVAIILLFITVATTGHIAMWSVLAIGLFNSIMFPTIFSLALHGLGSHTSQGSGILCLAIVGGAIVPLIQGALADAIGIHLAFLMPIICYAYIAFYGLIGSKS.

11 helical membrane-spanning segments follow: residues 21-41 (YGFA…ITCL), 62-82 (LIQF…GQLV), 90-110 (GIVV…PAAS), 113-133 (VYAL…ILQV), 158-178 (FNSL…LSAA), 192-212 (FPYL…AILK), 239-259 (LGAI…SFLV), 310-330 (AFVA…IAMW), 331-351 (SVLA…SLAL), 363-383 (GILC…GALA), and 388-408 (IHLA…YGLI).

The protein belongs to the major facilitator superfamily. FHS transporter (TC 2.A.1.7) family.

It localises to the cell inner membrane. Functionally, intake of glucose and galactose. The sequence is that of Glucose/galactose transporter (gluP) from Brucella abortus (strain 2308).